The chain runs to 172 residues: NAD(P)H-quinone oxidoreductase subunit J (172 aa).

This sequence belongs to the complex I 30 kDa subunit family. NDH-1 can be composed of about 15 different subunits; different subcomplexes with different compositions have been identified which probably have different functions.

It localises to the cellular thylakoid membrane. The catalysed reaction is a plastoquinone + NADH + (n+1) H(+)(in) = a plastoquinol + NAD(+) + n H(+)(out). It carries out the reaction a plastoquinone + NADPH + (n+1) H(+)(in) = a plastoquinol + NADP(+) + n H(+)(out). NDH-1 shuttles electrons from an unknown electron donor, via FMN and iron-sulfur (Fe-S) centers, to quinones in the respiratory and/or the photosynthetic chain. The immediate electron acceptor for the enzyme in this species is believed to be plastoquinone. Couples the redox reaction to proton translocation, and thus conserves the redox energy in a proton gradient. Cyanobacterial NDH-1 also plays a role in inorganic carbon-concentration. The chain is NAD(P)H-quinone oxidoreductase subunit J from Synechococcus sp. (strain ATCC 27144 / PCC 6301 / SAUG 1402/1) (Anacystis nidulans).